The following is a 342-amino-acid chain: MAEHDYHEDYGFSSFNDSSQEEHQDFLQFSKVFLPCMYLVVFVCGLVGNSLVLVISIFYHKLQSLTDVFLVNLPLADLVFVCTLPFWAYAGIHEWVFGQVMCKSLLGIYTINFYTSMLILTCITVDRFIVVVKATKAYNQQAKRMTWGKVTSLLIWVISLLVSLPQIIYGNVFNLDKLICGYHDEAISTVVLATQMTLGFFLPLLTMIVCYSVIIKTLLHAGGFQKHRSLKIIFLVMAVFLLTQMPFNLMKFIRSTHWEYYAMTSFHYTIMVTEAIAYLRACLNPVLYAFVSLKFRKNFWKLVKDIGCLPYLGVSHQWKSSEDNSKTFSASHNVEATSMFQL.

Topologically, residues 1–32 (MAEHDYHEDYGFSSFNDSSQEEHQDFLQFSKV) are extracellular. N-linked (GlcNAc...) asparagine glycosylation is present at N16. A helical transmembrane segment spans residues 33 to 59 (FLPCMYLVVFVCGLVGNSLVLVISIFY). The Cytoplasmic segment spans residues 60–68 (HKLQSLTDV). The helical transmembrane segment at 69–89 (FLVNLPLADLVFVCTLPFWAY) threads the bilayer. Topologically, residues 90–103 (AGIHEWVFGQVMCK) are extracellular. A disulfide bridge links C102 with C180. Residues 104-125 (SLLGIYTINFYTSMLILTCITV) traverse the membrane as a helical segment. The Cytoplasmic segment spans residues 126–143 (DRFIVVVKATKAYNQQAK). The helical transmembrane segment at 144 to 164 (RMTWGKVTSLLIWVISLLVSL) threads the bilayer. Residues 165–187 (PQIIYGNVFNLDKLICGYHDEAI) lie on the Extracellular side of the membrane. The helical transmembrane segment at 188 to 215 (STVVLATQMTLGFFLPLLTMIVCYSVII) threads the bilayer. At 216–231 (KTLLHAGGFQKHRSLK) the chain is on the cytoplasmic side. A helical membrane pass occupies residues 232-259 (IIFLVMAVFLLTQMPFNLMKFIRSTHWE). The Extracellular segment spans residues 260–275 (YYAMTSFHYTIMVTEA). A helical transmembrane segment spans residues 276 to 293 (IAYLRACLNPVLYAFVSL). The Cytoplasmic segment spans residues 294-342 (KFRKNFWKLVKDIGCLPYLGVSHQWKSSEDNSKTFSASHNVEATSMFQL).

Belongs to the G-protein coupled receptor 1 family. In terms of tissue distribution, expressed in lymphoid tissues and activated T cells.

It localises to the cell membrane. Receptor for the C-X-C chemokine CXCL16. Used as a coreceptor by SIVs and by strains of HIV-2 and m-tropic HIV-1. The sequence is that of C-X-C chemokine receptor type 6 (CXCR6) from Homo sapiens (Human).